The sequence spans 428 residues: Light-independent protochlorophyllide reductase subunit N (428 aa).

Cys16, Cys41, and Cys102 together coordinate [4Fe-4S] cluster.

This sequence belongs to the BchN/ChlN family. Protochlorophyllide reductase is composed of three subunits; ChlL, ChlN and ChlB. Forms a heterotetramer of two ChlB and two ChlN subunits. [4Fe-4S] cluster is required as a cofactor.

It catalyses the reaction chlorophyllide a + oxidized 2[4Fe-4S]-[ferredoxin] + 2 ADP + 2 phosphate = protochlorophyllide a + reduced 2[4Fe-4S]-[ferredoxin] + 2 ATP + 2 H2O. It functions in the pathway porphyrin-containing compound metabolism; chlorophyll biosynthesis (light-independent). Functionally, component of the dark-operative protochlorophyllide reductase (DPOR) that uses Mg-ATP and reduced ferredoxin to reduce ring D of protochlorophyllide (Pchlide) to form chlorophyllide a (Chlide). This reaction is light-independent. The NB-protein (ChlN-ChlB) is the catalytic component of the complex. This is Light-independent protochlorophyllide reductase subunit N from Synechococcus sp. (strain CC9311).